A 101-amino-acid polypeptide reads, in one-letter code: Thiosulfate sulfurtransferase GlpE (101 aa).

One can recognise a Rhodanese domain in the interval 17–101 (EAKSVQIVDI…GFSAWHEANA (85 aa)). Cys65 functions as the Cysteine persulfide intermediate in the catalytic mechanism.

The protein belongs to the GlpE family.

It localises to the cytoplasm. It catalyses the reaction thiosulfate + hydrogen cyanide = thiocyanate + sulfite + 2 H(+). The enzyme catalyses thiosulfate + [thioredoxin]-dithiol = [thioredoxin]-disulfide + hydrogen sulfide + sulfite + 2 H(+). In terms of biological role, transferase that catalyzes the transfer of sulfur from thiosulfate to thiophilic acceptors such as cyanide or dithiols. May function in a CysM-independent thiosulfate assimilation pathway by catalyzing the conversion of thiosulfate to sulfite, which can then be used for L-cysteine biosynthesis. The sequence is that of Thiosulfate sulfurtransferase GlpE from Shewanella oneidensis (strain ATCC 700550 / JCM 31522 / CIP 106686 / LMG 19005 / NCIMB 14063 / MR-1).